The sequence spans 615 residues: Alpha-fetoprotein (615 aa).

Positions 1–15 (MAVLPLSGAIRLSRG) are cleaved as a signal peptide. Residues 14–16 (RGD) carry the Cell attachment site motif. Albumin domains lie at 27-218 (WAKK…RRQA), 223-415 (KPIR…ELKK), and 416-609 (HIYE…VLVT). Intrachain disulfides connect Cys-109–Cys-121 and Cys-120–Cys-131. Asn-137 and Asn-157 each carry an N-linked (GlcNAc...) asparagine glycan. Cystine bridges form between Cys-155/Cys-200, Cys-199/Cys-213, Cys-236/Cys-282, Cys-281/Cys-289, Cys-301/Cys-315, Cys-314/Cys-325, Cys-396/Cys-405, Cys-428/Cys-458, and Cys-457/Cys-468. Residues 283–285 (RGD) carry the Cell attachment site motif. The N-linked (GlcNAc...) asparagine glycan is linked to Asn-472. 4 cysteine pairs are disulfide-bonded: Cys-485–Cys-501, Cys-500–Cys-511, Cys-538–Cys-593, and Cys-592–Cys-601.

Belongs to the ALB/AFP/VDB family. In terms of assembly, dimeric and trimeric forms have been found in addition to the monomeric form. Post-translationally, sulfated.

It localises to the secreted. In terms of biological role, binds copper, nickel, and fatty acids as well as, and bilirubin less well than, serum albumin. The sequence is that of Alpha-fetoprotein (AFP) from Gallus gallus (Chicken).